The following is a 452-amino-acid chain: Elongation factor Tu, mitochondrial (452 aa).

A mitochondrion-targeting transit peptide spans Met-1–Leu-43. One can recognise a tr-type G domain in the interval Lys-55–Thr-251. Residues Gly-64–Thr-71 form a G1 region. Residues Asp-67, Gly-69, Lys-70, Thr-71, and Thr-72 each coordinate GTP. Thr-71 is a Mg(2+) binding site. The residue at position 79 (Lys-79) is an N6-acetyllysine. Lys-88 carries the post-translational modification N6-acetyllysine; alternate. At Lys-88 the chain carries N6-succinyllysine; alternate. Residues Gly-105–Asn-109 form a G2 region. A G3 region spans residues Asp-126–Gly-129. GTP-binding residues include Asn-181, Asp-184, Ser-219, Ala-220, and Leu-221. The interval Asn-181 to Asp-184 is G4. Residues Ser-219 to Leu-221 form a G5 region. Residue Lys-234 is modified to N6-succinyllysine. Position 256 is an N6-acetyllysine (Lys-256). At Thr-278 the chain carries Phosphothreonine. Lys-286 carries the N6-succinyllysine modification. A Phosphoserine modification is found at Ser-312. 2 positions are modified to N6-acetyllysine: Lys-361 and Lys-418.

The protein belongs to the TRAFAC class translation factor GTPase superfamily. Classic translation factor GTPase family. EF-Tu/EF-1A subfamily. As to quaternary structure, interacts with NLRX1. Interacts with ATG16L1.

Its subcellular location is the mitochondrion. The catalysed reaction is GTP + H2O = GDP + phosphate + H(+). Its function is as follows. GTP hydrolase that promotes the GTP-dependent binding of aminoacyl-tRNA to the A-site of ribosomes during protein biosynthesis. Also plays a role in the regulation of autophagy and innate immunity. Recruits ATG5-ATG12 and NLRX1 at mitochondria and serves as a checkpoint of the RIGI-MAVS pathway. In turn, inhibits RLR-mediated type I interferon while promoting autophagy. The chain is Elongation factor Tu, mitochondrial (Tufm) from Mus musculus (Mouse).